The sequence spans 322 residues: CMP-sialic acid transporter 1 (322 aa).

Residues methionine 1 to glutamine 2 lie on the Cytoplasmic side of the membrane. The chain crosses the membrane as a helical span at residues tryptophan 3–leucine 23. At serine 24–aspartate 33 the chain is on the lumenal side. Residues tyrosine 34–tryptophan 54 traverse the membrane as a helical segment. The Cytoplasmic segment spans residues lysine 55–tyrosine 75. Residues leucine 76–valine 96 traverse the membrane as a helical segment. Residues aspartate 97–threonine 100 lie on the Lumenal side of the membrane. The chain crosses the membrane as a helical span at residues tyrosine 101 to leucine 120. The Cytoplasmic portion of the chain corresponds to lysine 121–asparagine 126. The chain crosses the membrane as a helical span at residues leucine 127 to valine 144. Residues lysine 145–serine 157 are Lumenal-facing. The chain crosses the membrane as a helical span at residues alanine 158 to valine 178. The Cytoplasmic portion of the chain corresponds to tyrosine 179–leucine 198. The helical transmembrane segment at tyrosine 199–phenylalanine 219 threads the bilayer. Residues glutamate 220 to serine 233 are Lumenal-facing. The helical transmembrane segment at isoleucine 234 to methionine 254 threads the bilayer. The Cytoplasmic segment spans residues lysine 255 to lysine 262. The chain crosses the membrane as a helical span at residues valine 263–valine 283. The Lumenal portion of the chain corresponds to arginine 284–threonine 286.

Belongs to the nucleotide-sugar transporter family. CMP-Sialate:CMP antiporter (TC 2.A.7.12) subfamily.

The protein localises to the golgi apparatus membrane. In terms of biological role, sugar transporter involved in the transport of CMP-sialic acid from the cytoplasm into the Golgi. May transport important nucleotide sugars such as CMP-Kdo (2-keto-3-deoxy-D-manno-octulosonic acid) in physiological conditions. In Oryza sativa subsp. indica (Rice), this protein is CMP-sialic acid transporter 1.